The sequence spans 44 residues: Large ribosomal subunit protein bL34 (44 aa).

The protein belongs to the bacterial ribosomal protein bL34 family.

The polypeptide is Large ribosomal subunit protein bL34 (Ehrlichia ruminantium (strain Gardel)).